The sequence spans 283 residues: Serine protease 57 (283 aa).

Residues 1 to 31 (MGLGLRGWGRPLLTVATALMLPVKPPAGSWG) form the signal peptide. One can recognise a Peptidase S1 domain in the interval 34–263 (IIGGHEVTPH…FVAWIWDVVR (230 aa)). Cysteines 59 and 75 form a disulfide. Active-site charge relay system residues include His74 and Asp122. Residues Asn129 and Asn189 are each glycosylated (N-linked (GlcNAc...) asparagine). Intrachain disulfides connect Cys157–Cys224, Cys188–Cys202, and Cys214–Cys239. The Charge relay system role is filled by Ser218.

This sequence belongs to the peptidase S1 family. Post-translationally, after cleavage of the signal peptide, the N-terminus is probably further processed by CTSC. Processing by CTSC is probably required for accumulation in cytoplasmic granules; in the absence of CTSC the protein does not accumulate. In terms of processing, N-glycosylated. As to expression, detected in peripheral blood neutrophil granulocytes, but not in other types of leukocytes. Detected in neutrophils and neutrophil precursors in bone marrow (at protein level). Detected in myeloblasts and promyelocytes in bone marrow.

It localises to the cytoplasmic granule lumen. Its subcellular location is the secreted. Its activity is regulated as follows. Inhibited by SERPINA1, SERPINC1 and SERPING1. Its function is as follows. Serine protease that cleaves preferentially after Arg residues. Can also cleave after citrulline (deimidated arginine) and methylarginine residues. This Homo sapiens (Human) protein is Serine protease 57 (PRSS57).